The primary structure comprises 150 residues: Large ribosomal subunit protein bL9 (150 aa).

Belongs to the bacterial ribosomal protein bL9 family.

In terms of biological role, binds to the 23S rRNA. The chain is Large ribosomal subunit protein bL9 from Stenotrophomonas maltophilia (strain R551-3).